The following is a 940-amino-acid chain: Protein translocase subunit SecA (940 aa).

ATP is bound by residues Q86, 104-108 (GEGKT), and D494. The segment at 884–940 (ATAKAQKDQQAEDAVLVGEDEPETPQGPPARGAFGQPTGASSAPQNREERRKADRRK) is disordered. Over residues 929–940 (NREERRKADRRK) the composition is skewed to basic and acidic residues.

Belongs to the SecA family. Monomer and homodimer. Part of the essential Sec protein translocation apparatus which comprises SecA, SecYEG and auxiliary proteins SecDF. Other proteins may also be involved.

The protein localises to the cell membrane. The protein resides in the cytoplasm. It carries out the reaction ATP + H2O + cellular proteinSide 1 = ADP + phosphate + cellular proteinSide 2.. In terms of biological role, part of the Sec protein translocase complex. Interacts with the SecYEG preprotein conducting channel. Has a central role in coupling the hydrolysis of ATP to the transfer of proteins into and across the cell membrane, serving as an ATP-driven molecular motor driving the stepwise translocation of polypeptide chains across the membrane. This chain is Protein translocase subunit SecA, found in Clavibacter sepedonicus (Clavibacter michiganensis subsp. sepedonicus).